Consider the following 728-residue polypeptide: 1,4-alpha-glucan branching enzyme GlgB (728 aa).

Aspartate 405 serves as the catalytic Nucleophile. The active-site Proton donor is the glutamate 458.

Belongs to the glycosyl hydrolase 13 family. GlgB subfamily. Monomer.

The catalysed reaction is Transfers a segment of a (1-&gt;4)-alpha-D-glucan chain to a primary hydroxy group in a similar glucan chain.. It functions in the pathway glycan biosynthesis; glycogen biosynthesis. Its function is as follows. Catalyzes the formation of the alpha-1,6-glucosidic linkages in glycogen by scission of a 1,4-alpha-linked oligosaccharide from growing alpha-1,4-glucan chains and the subsequent attachment of the oligosaccharide to the alpha-1,6 position. The sequence is that of 1,4-alpha-glucan branching enzyme GlgB from Shigella dysenteriae serotype 1 (strain Sd197).